Here is a 315-residue protein sequence, read N- to C-terminus: Porphobilinogen deaminase (315 aa).

Residue Cys-234 is modified to S-(dipyrrolylmethanemethyl)cysteine.

Belongs to the HMBS family. In terms of assembly, monomer. The cofactor is dipyrromethane.

The enzyme catalyses 4 porphobilinogen + H2O = hydroxymethylbilane + 4 NH4(+). The protein operates within porphyrin-containing compound metabolism; protoporphyrin-IX biosynthesis; coproporphyrinogen-III from 5-aminolevulinate: step 2/4. Tetrapolymerization of the monopyrrole PBG into the hydroxymethylbilane pre-uroporphyrinogen in several discrete steps. This Mycobacterium leprae (strain TN) protein is Porphobilinogen deaminase (hemC).